The chain runs to 145 residues: Transcription antitermination protein NusB (145 aa).

Belongs to the NusB family.

Its function is as follows. Involved in transcription antitermination. Required for transcription of ribosomal RNA (rRNA) genes. Binds specifically to the boxA antiterminator sequence of the ribosomal RNA (rrn) operons. The sequence is that of Transcription antitermination protein NusB from Geobacter sp. (strain M21).